We begin with the raw amino-acid sequence, 306 residues long: Dermonecrotic toxin LiSicTox-alphaIA1bi (306 aa).

A signal peptide spans 1–18 (MLPYIVLVLGCWSVLSQA). The propeptide occupies 19-26 (AQTDDEER). Residue His-38 is part of the active site. Residues Glu-58 and Asp-60 each contribute to the Mg(2+) site. The Nucleophile role is filled by His-74. 2 disulfides stabilise this stretch: Cys-78–Cys-84 and Cys-80–Cys-223. Asp-118 is a Mg(2+) binding site.

This sequence belongs to the arthropod phospholipase D family. Class II subfamily. Class IIa sub-subfamily. Mg(2+) serves as cofactor. Expressed by the venom gland.

It localises to the secreted. The catalysed reaction is an N-(acyl)-sphingosylphosphocholine = an N-(acyl)-sphingosyl-1,3-cyclic phosphate + choline. It carries out the reaction an N-(acyl)-sphingosylphosphoethanolamine = an N-(acyl)-sphingosyl-1,3-cyclic phosphate + ethanolamine. The enzyme catalyses a 1-acyl-sn-glycero-3-phosphocholine = a 1-acyl-sn-glycero-2,3-cyclic phosphate + choline. It catalyses the reaction a 1-acyl-sn-glycero-3-phosphoethanolamine = a 1-acyl-sn-glycero-2,3-cyclic phosphate + ethanolamine. Dermonecrotic toxins cleave the phosphodiester linkage between the phosphate and headgroup of certain phospholipids (sphingolipid and lysolipid substrates), forming an alcohol (often choline) and a cyclic phosphate. This toxin acts on sphingomyelin (SM). The level of enzymatic activity is high according to Tambourgi and colleagues or low according to Felicori and colleagues. It may also act on ceramide phosphoethanolamine (CPE), lysophosphatidylcholine (LPC) and lysophosphatidylethanolamine (LPE), but not on lysophosphatidylserine (LPS), and lysophosphatidylglycerol (LPG). It acts by transphosphatidylation, releasing exclusively cyclic phosphate products as second products. It induces complement-dependent hemolysis, dermonecrosis, vascular permeability and platelet aggregation. Both C5a and the membrane attack complex may play a role in the induction of dermonecrosis. MMP-9 and MMP-2 produced by skin fibroblasts can also contribute to proteolytic tissue destruction. This is Dermonecrotic toxin LiSicTox-alphaIA1bi from Loxosceles intermedia (Brown spider).